A 206-amino-acid polypeptide reads, in one-letter code: Cytochrome b-245 chaperone 1 homolog (206 aa).

Residues 21–43 form a helical membrane-spanning segment; the sequence is GIRSWSILVGIASVGLAAAYYSS. Residues 172–206 form a disordered region; it reads ADDDYPDDDDGIEDLGLGDSSDSQDDPDGDDDEEH. 2 stretches are compositionally biased toward acidic residues: residues 174-184 and 193-206; these read DDYPDDDDGIE and DSQD…DEEH.

Belongs to the CYBC1 family.

It localises to the endoplasmic reticulum membrane. In terms of biological role, functions as a chaperone necessary for a stable expression of the CYBA and CYBB subunits of the cytochrome b-245 heterodimer. In Danio rerio (Zebrafish), this protein is Cytochrome b-245 chaperone 1 homolog.